The following is a 397-amino-acid chain: Odorant receptor 22b (397 aa).

Topologically, residues 1–49 (MLSQFFPHIKEKPLSERVKSRDAFVYLDRVMWSFGWTVPENKRWDLHYK) are cytoplasmic. The helical transmembrane segment at 50 to 70 (LWSTFVTLLIFILLPISVSVE) threads the bilayer. The Extracellular segment spans residues 71–85 (YIQRFKTFSAGEFLS). Residues 86–105 (SIQIGVNMYGSSFKSYLTMM) traverse the membrane as a helical segment. Residues 106–143 (GYKKRQEAKMSLDELDKRCVCDEERTIVHRHVALGNFC) are Cytoplasmic-facing. The helical transmembrane segment at 144–164 (YIFYHIAYTSFLISNFLSFIM) threads the bilayer. Topologically, residues 165–194 (KRIHAWRMYFPYVDPEKQFYISSIAEVILR) are extracellular. A helical transmembrane segment spans residues 195 to 215 (GWAVFMDLCTDVCPLISMVIA). Residues 216–268 (RCHITLLKQRLRNLRSEPGRTEDEYLKELADCVRDHRLILDYVDALRSVFSGT) lie on the Cytoplasmic side of the membrane. Residues 269–289 (IFVQFLLIGIVLGLSMINIMF) traverse the membrane as a helical segment. Residues 290–295 (FSTLST) lie on the Extracellular side of the membrane. Residues 296–316 (GVAVVLFMSCVSMQTFPFCYL) form a helical membrane-spanning segment. Over 317–347 (CNMIMDDCQEMADSLFQSDWTSADRRYKSTL) the chain is Cytoplasmic. Residues 348–368 (VYFLHNLQQPIILTAGGVFPI) form a helical membrane-spanning segment. At 369 to 397 (SMQTNLNMVKLAFTVVTIVKQFNLAEKFQ) the chain is on the extracellular side.

This sequence belongs to the insect chemoreceptor superfamily. Heteromeric odorant receptor channel (TC 1.A.69) family. Or2a subfamily. In terms of assembly, interacts with Orco, via conserved C-terminal cytoplasmic loops. Complexes exist early in the endomembrane system in olfactory sensory neurons (OSNs), coupling these complexes to the conserved ciliary trafficking pathway. As to expression, expressed with Orco in 20-22 sensory neurons on the medial-proximal edge of the antenna. This expression pattern matches the distribution of the large sensilla basiconica. Expression is first seen at 60 hours APF in a subset of cells restricted to a subregion of the developing antenna. Expression continues throughout antennal development. Expressed in the ab3A neuron which responds to ethyl butyrate.

It localises to the cell membrane. Odorant receptor which mediates acceptance or avoidance behavior, depending on its substrates. The odorant receptor repertoire encodes a large collection of odor stimuli that vary widely in identity, intensity, and duration. Involved in the behavioral responses to esters. Complexes with Orco to form odorant-sensing units, providing sensitive and prolonged odorant signaling and calcium permeability. They are necessary and sufficient to promote functional reconstitution of odor-evoked signaling in sensory neurons that normally respond only to carbon dioxide. In Drosophila melanogaster (Fruit fly), this protein is Odorant receptor 22b (Or22b).